The sequence spans 985 residues: Probable oxidoreductase YjgC (985 aa).

Positions Gly3–Asp79 constitute a 2Fe-2S ferredoxin-type domain. Residues Cys37, Cys48, Cys51, and Cys63 each contribute to the [2Fe-2S] cluster site. The 4Fe-4S His(Cys)3-ligated-type domain maps to Asp79 to Lys119. The [4Fe-4S] cluster site is built by His95, Cys99, Cys102, Cys109, Cys148, Cys151, Cys154, Cys158, Cys191, Cys194, Cys197, Cys201, Cys265, Cys268, Cys272, and Cys300. 2 consecutive 4Fe-4S ferredoxin-type domains span residues Pro139–Asp170 and Asn182–Met211. In terms of domain architecture, 4Fe-4S Mo/W bis-MGD-type spans Ile258–Glu314.

In the C-terminal section; belongs to the prokaryotic molybdopterin-containing oxidoreductase family. [2Fe-2S] cluster serves as cofactor. [4Fe-4S] cluster is required as a cofactor. The cofactor is Mo-bis(molybdopterin guanine dinucleotide).

This Bacillus subtilis (strain 168) protein is Probable oxidoreductase YjgC (yjgC).